Here is a 708-residue protein sequence, read N- to C-terminus: Lactotransferrin (708 aa).

The signal sequence occupies residues 1–19 (MKLFFPALLSLGALGLCLA). 2 consecutive Transferrin-like domains span residues 25-352 (VRWC…GLRE) and 364-693 (VVWC…KLRR). 2 cysteine pairs are disulfide-bonded: C28–C64 and C38–C55. The segment at 44–51 (RMKKVRGP) is interaction with E.coli ompC. Position 79 (D79) interacts with Fe(3+). The active site involves K92. Fe(3+) is bound at residue Y111. 5 cysteine pairs are disulfide-bonded: C134/C217, C176/C192, C179/C202, C189/C200, and C250/C264. T136, R140, A142, and G143 together coordinate hydrogencarbonate. Y211 is a Fe(3+) binding site. The N-linked (GlcNAc...) asparagine glycan is linked to N252. Residue H272 participates in Fe(3+) binding. Catalysis depends on S278, which acts as the Nucleophile. Intrachain disulfides connect C367–C399 and C377–C390. N385 carries an N-linked (GlcNAc...) asparagine glycan. Fe(3+)-binding residues include D414 and Y452. Intrachain disulfides connect C424–C703, C444–C666, C476–C551, C500–C694, C510–C524, C521–C534, C592–C606, and C644–C649. Hydrogencarbonate contacts are provided by T478, R482, A484, and G485. N537 is a glycosylation site (N-linked (GlcNAc...) asparagine). Position 545 (Y545) interacts with Fe(3+). N594 is a glycosylation site (N-linked (GlcNAc...) asparagine). Fe(3+) is bound at residue H614.

This sequence belongs to the transferrin family. Monomer. Found in a complex with LTF, CLU, EPPIN and SEMG1. Interacts with E.coli outer membrane protein C (OmpC). Found in a complex with MPO and LTF; interacts directly with CP, allows Fe(3+) incorporation into LTF and activation of CP ferroxidase activity. Post-translationally, poly-N-acetyllactosaminic carbohydrate moiety seems to be needed for TLR4 activation.

It is found in the secreted. The protein localises to the cytoplasmic granule. Functionally, transferrins are iron binding transport proteins which can bind two Fe(3+) ions in association with the binding of an anion, usually bicarbonate. Its function is as follows. Major iron-binding and multifunctional protein found in exocrine fluids such as breast milk and mucosal secretions. Has antimicrobial activity, which depends on the extracellular cation concentration. Antimicrobial properties include bacteriostasis, which is related to its ability to sequester free iron and thus inhibit microbial growth, as well as direct bactericidal properties leading to the release of lipopolysaccharides from the bacterial outer membrane. Can also prevent bacterial biofilm development in P.aeruginosa infection. Has weak antifungal activity against C.albicans. Has anabolic, differentiating and anti-apoptotic effects on osteoblasts and can also inhibit osteoclastogenesis, possibly playing a role in the regulation of bone growth. Promotes binding of species C adenoviruses to epithelial cells, promoting adenovirus infection. Can inhibit papillomavirus infections. Stimulates the TLR4 signaling pathway leading to NF-kappa-B activation and subsequent pro-inflammatory cytokine production while also interfering with the lipopolysaccharide (LPS)-stimulated TLR4 signaling. Inhibits neutrophil granulocyte migration to sites of apoptosis, when secreted by apoptotic cells. Stimulates VEGFA-mediated endothelial cell migration and proliferation. Binds heparin, chondroitin sulfate and possibly other glycosaminoglycans (GAGs). Also binds specifically to pneumococcal surface protein A (PspA), the lipid A portion of bacterial lipopolysaccharide (LPS), lysozyme and DNA. Lactoferricin binds to the bacterial surface and is crucial for the bactericidal functions. Has some antiviral activity against papillomavirus infection. N-terminal region shows strong antifungal activity against C.albicans. Contains two BBXB heparin-binding consensus sequences that appear to form the predominate functional GAG-binding site. In terms of biological role, the lactotransferrin transferrin-like domain 1 functions as a serine protease of the peptidase S60 family that cuts arginine rich regions. This function contributes to the antimicrobial activity. Shows a preferential cleavage at -Arg-Ser-Arg-Arg-|- and -Arg-Arg-Ser-Arg-|-, and of Z-Phe-Arg-|-aminomethylcoumarin sites. The polypeptide is Lactotransferrin (LTF) (Camelus dromedarius (Dromedary)).